We begin with the raw amino-acid sequence, 429 residues long: Histidinol dehydrogenase (429 aa).

NAD(+) is bound by residues Tyr-127, Gln-188, and Asn-211. Substrate-binding residues include Ser-234, Gln-256, and His-259. The Zn(2+) site is built by Gln-256 and His-259. Residues Glu-324 and His-325 each act as proton acceptor in the active site. The substrate site is built by His-325, Asp-358, Glu-412, and His-417. Asp-358 provides a ligand contact to Zn(2+). Residue His-417 coordinates Zn(2+).

It belongs to the histidinol dehydrogenase family. The cofactor is Zn(2+).

It catalyses the reaction L-histidinol + 2 NAD(+) + H2O = L-histidine + 2 NADH + 3 H(+). The protein operates within amino-acid biosynthesis; L-histidine biosynthesis; L-histidine from 5-phospho-alpha-D-ribose 1-diphosphate: step 9/9. In terms of biological role, catalyzes the sequential NAD-dependent oxidations of L-histidinol to L-histidinaldehyde and then to L-histidine. This is Histidinol dehydrogenase from Bacillus anthracis.